The sequence spans 980 residues: Zinc finger BED domain-containing protein 6 (980 aa).

The segment at 1–89 (MSVCTLSVPV…ILAKKFSKDL (89 aa)) is required for nucleolar localization. The interval 89–109 (LGSGRPVADAPASLASGAPEQ) is disordered. The BED-type 1 zinc-finger motif lies at 130–187 (AKTSIVWHFFHVDPQYTWRAICNLCEKSVSRGKPGSHLGTSTLQRHLQARHSPHWTRA). Zn(2+) contacts are provided by cysteine 151, cysteine 154, histidine 175, and histidine 180. Residues 201-239 (LDLSLSPPSPGSNGSFEYIPTDSVDENRMGKKRDKSASD) form a disordered region. A compositionally biased stretch (low complexity) spans 203–215 (LSLSPPSPGSNGS). The BED-type 2 zinc-finger motif lies at 265–322 (AKTSAVWNFFYTDPQHISRAVCNICKRSVSRGRPGSHLGTSTLQRHLQATHPIHWAVA). Cysteine 286, cysteine 289, histidine 310, and histidine 315 together coordinate Zn(2+). The tract at residues 328 to 397 (AIGNGLDETE…ADQDNPVHAQ (70 aa)) is disordered. Acidic residues predominate over residues 360–373 (TAEDLSDSDTDEPP). The residue at position 383 (serine 383) is a Phosphoserine. Residues 868-950 (VVDEYFKEKY…EQLIFLKMNL (83 aa)) are HATC (Hobo-Ac-Tam3) domain.

In terms of tissue distribution, expressed in pancreatic islet cells and weakly expressed in surrounding exocrine tissues (at protein level). Expressed in muscle and brain (at protein level). Shows broad tissue distribution with expression detected in brain, stomach, intestine, heart, kidney, liver, lung, skeletal muscle, ovary, spleen, tail and testis.

It localises to the nucleus. The protein resides in the nucleolus. It is found in the cytoplasm. In terms of biological role, transcriptional repressor which binds to the consensus sequence 5'-GCTCGC-3', transcription regulation may be tissue-specific. Regulates the expression of target genes such as: IGF2, PGAP6/TMEM8, ENHO, and PIANP. Acts as a transcriptional repressor of growth factor IGF2, thereby negatively regulating postnatal growth of muscles and internal organs, especially in females. Negatively regulates myoblast differentiation and myoblast mitochondrial activity via its regulation of IGF2 transcription. Negatively regulates the cell cycle of myoblasts, potentially via transcriptional regulation of the E2F family of transcription factors such as: E2F1 and E2F2. Positively regulates the cell cycle and survival of pancreatic beta cells. Binds to the CDH2 gene and may directly repress CDH2 transcription. Probably by controlling CDH2 expression, regulates pancreatic beta cell adhesion, and formation of cell-to-cell junctions between pancreatic beta cells and neural crest stem cells. May also play a role in embryonic beta cell differentiation. May play a role in insulin sensitivity and glucose clearance. This Mus musculus (Mouse) protein is Zinc finger BED domain-containing protein 6.